The chain runs to 183 residues: UPF0397 protein VFMJ11_1662 (183 aa).

5 helical membrane passes run 8–28, 41–61, 75–95, 110–130, and 147–167; these read VVVI…MFGI, AVLA…VGFI, WLTW…FPII, FLIF…TSAF, and LCII…FILN.

It belongs to the UPF0397 family.

It localises to the cell membrane. The sequence is that of UPF0397 protein VFMJ11_1662 from Aliivibrio fischeri (strain MJ11) (Vibrio fischeri).